The sequence spans 326 residues: Lipoyl synthase (326 aa).

[4Fe-4S] cluster is bound by residues cysteine 74, cysteine 79, cysteine 85, cysteine 100, cysteine 104, cysteine 107, and serine 314. Residues 85-303 (CFGRGTATFM…EEEAYKMGFS (219 aa)) enclose the Radical SAM core domain.

Belongs to the radical SAM superfamily. Lipoyl synthase family. [4Fe-4S] cluster serves as cofactor.

Its subcellular location is the cytoplasm. The enzyme catalyses [[Fe-S] cluster scaffold protein carrying a second [4Fe-4S](2+) cluster] + N(6)-octanoyl-L-lysyl-[protein] + 2 oxidized [2Fe-2S]-[ferredoxin] + 2 S-adenosyl-L-methionine + 4 H(+) = [[Fe-S] cluster scaffold protein] + N(6)-[(R)-dihydrolipoyl]-L-lysyl-[protein] + 4 Fe(3+) + 2 hydrogen sulfide + 2 5'-deoxyadenosine + 2 L-methionine + 2 reduced [2Fe-2S]-[ferredoxin]. It participates in protein modification; protein lipoylation via endogenous pathway; protein N(6)-(lipoyl)lysine from octanoyl-[acyl-carrier-protein]: step 2/2. Its function is as follows. Catalyzes the radical-mediated insertion of two sulfur atoms into the C-6 and C-8 positions of the octanoyl moiety bound to the lipoyl domains of lipoate-dependent enzymes, thereby converting the octanoylated domains into lipoylated derivatives. The polypeptide is Lipoyl synthase (Acidovorax ebreus (strain TPSY) (Diaphorobacter sp. (strain TPSY))).